We begin with the raw amino-acid sequence, 493 residues long: Galactose-1-phosphate uridylyltransferase (493 aa).

The protein belongs to the galactose-1-phosphate uridylyltransferase type 2 family.

It localises to the cytoplasm. The enzyme catalyses alpha-D-galactose 1-phosphate + UDP-alpha-D-glucose = alpha-D-glucose 1-phosphate + UDP-alpha-D-galactose. It participates in carbohydrate metabolism; galactose metabolism. The protein is Galactose-1-phosphate uridylyltransferase (galT) of Streptococcus thermophilus.